We begin with the raw amino-acid sequence, 180 residues long: Adenine phosphoribosyltransferase (180 aa).

At S2 the chain carries N-acetylserine. Phosphoserine occurs at positions 15 and 30. A Phosphotyrosine modification is found at Y60. S66 carries the post-translational modification Phosphoserine. Residue K114 is modified to N6-acetyllysine. Residue T135 is modified to Phosphothreonine.

The protein belongs to the purine/pyrimidine phosphoribosyltransferase family. As to quaternary structure, homodimer.

It is found in the cytoplasm. The catalysed reaction is AMP + diphosphate = 5-phospho-alpha-D-ribose 1-diphosphate + adenine. It participates in purine metabolism; AMP biosynthesis via salvage pathway; AMP from adenine: step 1/1. Catalyzes a salvage reaction resulting in the formation of AMP, that is energically less costly than de novo synthesis. This chain is Adenine phosphoribosyltransferase, found in Mastomys natalensis (African soft-furred rat).